The primary structure comprises 1445 residues: Protein HUA2-LIKE 1 (1445 aa).

The PWWP domain occupies 20-77; that stretch reads LGDLVLAKVKGFPAWPAKIGQPEDWNQAPDPKKHFVQFYGTGEIGFVTPPDIQPFTSE. Disordered regions lie at residues 133–197, 211–302, 319–356, 409–439, 460–491, 641–685, and 797–835; these read KYLN…SPDP, TCTD…DLNI, FENE…SKRL, EHTS…SDSD, DDDD…ANAS, GIPK…TSTP, and LTPS…SLSG. Polar residues-rich tracts occupy residues 173–187 and 211–225; these read QDSS…SPSS and TCTD…NLVN. 3 stretches are compositionally biased toward basic and acidic residues: residues 228-257, 274-293, and 331-350; these read RIIR…RAAT, GQDH…ESSD, and DESK…DQKQ. 2 stretches are compositionally biased toward polar residues: residues 660–673 and 797–814; these read RVSS…NQRS and LTPS…QAGT. Positions 838-979 constitute a CID domain; it reads EAAISRDTFE…RYIGDLGASG (142 aa). Residues 1110–1203 form a disordered region; the sequence is PATTCATELP…SLPLQPGFAP (94 aa). Residues 1124 to 1170 are compositionally biased toward pro residues; it reads GSPPLPHESPPSPPPQPPSSPPPPSSPPQLAPAPPPSDHCLPPPTAP.

In terms of tissue distribution, expressed throughout young primordia, and vegetative and reproductive apices.

The protein resides in the nucleus. Functionally, probable transcription factor that acts with partial redundancy with HULK2 and HULK3. Plays diverse and essential roles in the control of plant development, physiology and flowering time. The polypeptide is Protein HUA2-LIKE 1 (Arabidopsis thaliana (Mouse-ear cress)).